A 298-amino-acid polypeptide reads, in one-letter code: tRNA-uridine aminocarboxypropyltransferase 2 (298 aa).

At M1 the chain carries N-acetylmethionine. Residues 1–10 show a composition bias toward basic and acidic residues; that stretch reads MEPQAEERTL. A disordered region spans residues 1 to 55; it reads MEPQAEERTLGEPAPPPSGALASPTPDEEERTEGGAPPTATPAGASGDSTSADGL. Residues 34-45 show a composition bias toward low complexity; the sequence is GGAPPTATPAGA. S132 bears the Phosphoserine mark. The short motif at 178–181 is the DXTW element; that stretch reads DGTW.

The protein belongs to the TDD superfamily. DTWD2 family.

It is found in the nucleus. The protein localises to the cytoplasm. The catalysed reaction is a uridine in tRNA + S-adenosyl-L-methionine = a 3-[(3S)-3-amino-3-carboxypropyl]uridine in tRNA + S-methyl-5'-thioadenosine + H(+). Functionally, catalyzes the formation of 3-(3-amino-3-carboxypropyl)uridine (acp3U) at position 20a in the D-loop of several cytoplasmic tRNAs (acp3U(20a)). Also has a weak activity to form acp3U at position 20 in the D-loop of tRNAs (acp3U(20)). Involved in glycoRNA biosynthesis by mediating formation of acp3U, which acts as an attachment site for N-glycans on tRNAs. GlycoRNAs consist of RNAs modified with secretory N-glycans that are presented on the cell surface. The chain is tRNA-uridine aminocarboxypropyltransferase 2 from Mus musculus (Mouse).